We begin with the raw amino-acid sequence, 57 residues long: Protein GnsB (57 aa).

Belongs to the gns family.

Its function is as follows. Overexpression increases levels of unsaturated fatty acids and suppresses both the temperature-sensitive fabA6 mutation and cold-sensitive secG null mutation. The chain is Protein GnsB (gnsB) from Escherichia coli (strain K12).